The following is a 20-amino-acid chain: APSDTTIAETLTITEEFFPD.

A disordered region spans residues 1-20 (APSDTTIAETLTITEEFFPD).

Hemolymph.

The protein localises to the secreted. It is found in the extracellular space. Its function is as follows. Inhibits trypsin stoichiometrically. Also inhibits chymotrypsin very weakly. The polypeptide is Trypsin inhibitor (Mythimna unipuncta (Armyworm moth)).